The sequence spans 354 residues: Peptide chain release factor 1 (354 aa).

Q232 carries the N5-methylglutamine modification.

Belongs to the prokaryotic/mitochondrial release factor family. Post-translationally, methylated by PrmC. Methylation increases the termination efficiency of RF1.

The protein resides in the cytoplasm. Peptide chain release factor 1 directs the termination of translation in response to the peptide chain termination codons UAG and UAA. This is Peptide chain release factor 1 from Jannaschia sp. (strain CCS1).